A 243-amino-acid polypeptide reads, in one-letter code: R-spondin-2 (243 aa).

A signal peptide spans 1–23 (MRFCLFSFALIILNCMDYSQCQG). 11 cysteine pairs are disulfide-bonded: cysteine 40–cysteine 46, cysteine 43–cysteine 52, cysteine 55–cysteine 74, cysteine 78–cysteine 93, cysteine 96–cysteine 104, cysteine 101–cysteine 110, cysteine 113–cysteine 124, cysteine 128–cysteine 141, cysteine 145–cysteine 187, cysteine 156–cysteine 163, and cysteine 196–cysteine 203. The FU repeat unit spans residues 90-134 (MNRCARCRIENCDSCFSKDFCTKCKVGFYLHRGRCFDECPDGFAP). Residues 144-204 (GCEVGHWSEW…RCKMAMRHCP (61 aa)) enclose the TSP type-1 domain. Residue asparagine 160 is glycosylated (N-linked (GlcNAc...) asparagine). Positions 204–224 (PGGKRTPKAKEKRNKKKRRKL) are enriched in basic residues. The disordered stretch occupies residues 204–243 (PGGKRTPKAKEKRNKKKRRKLIERAQEQHSVFLATDRVNQ).

It belongs to the R-spondin family. As to quaternary structure, interacts with WNT1. Binds heparin. Interacts with LGR4, LGR5 and LGR6.

It is found in the secreted. In terms of biological role, activator of the canonical Wnt signaling pathway by acting as a ligand for LGR4-6 receptors. Upon binding to LGR4-6 (LGR4, LGR5 or LGR6), LGR4-6 associate with phosphorylated LRP6 and frizzled receptors that are activated by extracellular Wnt receptors, triggering the canonical Wnt signaling pathway to increase expression of target genes. Also regulates the canonical Wnt/beta-catenin-dependent pathway and non-canonical Wnt signaling by acting as an inhibitor of ZNRF3, an important regulator of the Wnt signaling pathway. Probably also acts as a ligand for frizzled and LRP receptors. During embryonic development, plays a crucial role in limb specification, amplifying the Wnt signaling pathway independently of LGR4-6 receptors, possibly by acting as a direct antagonistic ligand to RNF43 and ZNRF3, hence governing the number of limbs an embryo should form. The sequence is that of R-spondin-2 (Rspo2) from Mus musculus (Mouse).